Here is a 30-residue protein sequence, read N- to C-terminus: GIPCGESCVFIPCVTTVIGCSCKDKVCYNN.

Residues 1–30 constitute a cross-link (cyclopeptide (Gly-Asn)); that stretch reads GIPCGESCVFIPCVTTVIGCSCKDKVCYNN. Disulfide bonds link cysteine 4–cysteine 20, cysteine 8–cysteine 22, and cysteine 13–cysteine 27.

Post-translationally, this is a cyclic peptide.

Probably participates in a plant defense mechanism. This Chassalia chartacea (Chassalia curviflora) protein is Chassatide C9.